The sequence spans 575 residues: Major outer membrane protein MspA (575 aa).

The first 19 residues, 1–19 (MKKALVFFVALAMIGSVFA), serve as a signal peptide directing secretion.

It localises to the cell outer membrane. Its function is as follows. Major component of the outer membrane sheath. In Treponema maltophilum, this protein is Major outer membrane protein MspA (mspA).